We begin with the raw amino-acid sequence, 309 residues long: Shugoshin (309 aa).

Residues 42–77 (NLLLKQQVVQCTKTIEKLRNENVALRQKNQELIDGT) adopt a coiled-coil conformation. 2 disordered regions span residues 165–195 (FDNN…KGRR) and 210–309 (EEAS…NTFF). The segment covering 167–178 (NNSSQSTSSIQN) has biased composition (low complexity). Over residues 184-193 (PRKKQSVGKG) the composition is skewed to basic residues.

It belongs to the shugoshin family. As to expression, expressed in gonads.

Its subcellular location is the nucleus. It is found in the chromosome. The protein localises to the centromere. Its function is as follows. Component of cell cycle checkpoints, which ensures chromosome segregation during meiosis and mitosis. During meiotic prophase, it is involved in the regulation of the synapsis checkpoint, which monitors whether homologous chromosomes have synapsed, and the DNA damage response. Plays a central role in chromosome cohesion during cell division by preventing premature dissociation of cohesin complex after prophase, when most of cohesin complex dissociates from chromosomes arms. This Caenorhabditis elegans protein is Shugoshin.